Reading from the N-terminus, the 625-residue chain is Endoglucanase 13 (625 aa).

The N-terminal stretch at 1 to 34 (MAATMNKTPATTFLLIPAAASLVLLLAAAASVEA) is a signal peptide. The active-site Nucleophile is aspartate 91. Histidine 427 is an active-site residue. An N-linked (GlcNAc...) asparagine glycan is attached at asparagine 440. Active-site residues include aspartate 479 and glutamate 488. Residues 509–530 (ADNTPEYTPAPNAPSPSNGGSP) form a disordered region.

Belongs to the glycosyl hydrolase 9 (cellulase E) family. As to expression, expressed in roots and flowers.

It is found in the secreted. The enzyme catalyses Endohydrolysis of (1-&gt;4)-beta-D-glucosidic linkages in cellulose, lichenin and cereal beta-D-glucans.. This chain is Endoglucanase 13 (GLU6), found in Oryza sativa subsp. japonica (Rice).